The chain runs to 160 residues: Nucleotide-binding protein ASA_3207 (160 aa).

Belongs to the YajQ family.

Its function is as follows. Nucleotide-binding protein. The polypeptide is Nucleotide-binding protein ASA_3207 (Aeromonas salmonicida (strain A449)).